The sequence spans 149 residues: MKSALLFTLVVAAVHAQSPQVISPAPRRESNEIDCPEYCLDVYDPVGDGEGNTYSNECYMKRAKCHNETTPPAWKDLVLITGSSTGEQPPSKKCSTVCPDVELPVCGSNRVRYGNPCELRIAACEHPELNIVEDSGKACVGSKVTPQEG.

A signal peptide spans 1–16 (MKSALLFTLVVAAVHA). 2 Kazal-like domains span residues 29-86 (ESNE…SSTG) and 88-141 (QPPS…ACVG). Cystine bridges form between cysteine 35-cysteine 65 and cysteine 39-cysteine 58. Asparagine 67 carries N-linked (GlcNAc...) asparagine glycosylation. 3 disulfide bridges follow: cysteine 94/cysteine 124, cysteine 98/cysteine 117, and cysteine 106/cysteine 139.

Interacts with host subtilisin-like protease P69B.

It localises to the secreted. Functionally, secreted effector that interacts with and inhibits the pathogenesis-related P69B subtilisin-like serine protease of host tomato. Inhibition of host proteases by a pathogen extracellular protease inhibitor forms a specific type of defense-counterdefense mechanism between plants and microbial pathogens. This is Extracellular protease inhibitor 1 from Phytophthora infestans (Potato late blight agent).